The primary structure comprises 260 residues: ATP synthase subunit a (260 aa).

7 consecutive transmembrane segments (helical) span residues phenylalanine 29–isoleucine 49, phenylalanine 95–isoleucine 115, histidine 124–phenylalanine 144, phenylalanine 151–leucine 171, methionine 191–methionine 211, glutamate 213–leucine 233, and valine 237–isoleucine 257.

Belongs to the ATPase A chain family. F-type ATPases have 2 components, CF(1) - the catalytic core - and CF(0) - the membrane proton channel. CF(1) has five subunits: alpha(3), beta(3), gamma(1), delta(1), epsilon(1). CF(0) has three main subunits: a, b and c.

It is found in the mitochondrion inner membrane. Functionally, mitochondrial membrane ATP synthase (F(1)F(0) ATP synthase or Complex V) produces ATP from ADP in the presence of a proton gradient across the membrane which is generated by electron transport complexes of the respiratory chain. F-type ATPases consist of two structural domains, F(1) - containing the extramembraneous catalytic core and F(0) - containing the membrane proton channel, linked together by a central stalk and a peripheral stalk. During catalysis, ATP synthesis in the catalytic domain of F(1) is coupled via a rotary mechanism of the central stalk subunits to proton translocation. Key component of the proton channel; it may play a direct role in the translocation of protons across the membrane. In Brassica napus (Rape), this protein is ATP synthase subunit a (ATP6).